A 573-amino-acid chain; its full sequence is ATP-dependent RNA helicase RhlB (573 aa).

A Q motif motif is present at residues 9–37 (VTFSSFDLHPALIAGLESAGFTRCTPIQA). Positions 40–220 (LPVALPGGDV…YEHMNEPEKL (181 aa)) constitute a Helicase ATP-binding domain. Residue 53-60 (AQTGTGKT) coordinates ATP. Positions 166-169 (DEAD) match the DEAD box motif. A Helicase C-terminal domain is found at 231-393 (RVRQRIYFPS…PVTSELLTPL (163 aa)). Residues 391–560 (TPLPRAPRVP…KPSGSPSLLS (170 aa)) form a disordered region. The span at 402–411 (EGEEADDDAG) shows a compositional bias: acidic residues. Positions 419 to 432 (REAREQRAAEEQRR) are enriched in basic and acidic residues. A compositionally biased stretch (gly residues) spans 435–450 (GRSGSGGSRSGSGGGG). The span at 451-462 (GRREGAGADGKP) shows a compositional bias: basic and acidic residues. A compositionally biased stretch (low complexity) spans 484–499 (PVVAAAAGQAPSAGVA). The span at 505–514 (PRKRRRRRNG) shows a compositional bias: basic residues. A compositionally biased stretch (low complexity) spans 541 to 560 (VVAKPVRAAAKPSGSPSLLS).

It belongs to the DEAD box helicase family. RhlB subfamily. In terms of assembly, component of the RNA degradosome, which is a multiprotein complex involved in RNA processing and mRNA degradation.

Its subcellular location is the cytoplasm. It catalyses the reaction ATP + H2O = ADP + phosphate + H(+). Functionally, DEAD-box RNA helicase involved in RNA degradation. Has RNA-dependent ATPase activity and unwinds double-stranded RNA. The protein is ATP-dependent RNA helicase RhlB of Xanthomonas euvesicatoria pv. vesicatoria (strain 85-10) (Xanthomonas campestris pv. vesicatoria).